Consider the following 395-residue polypeptide: MAKKRVVVLYGGRADEHSISCISTAGVLGAMDTERFEPIPVGITKDGKWIINGEDPRGWNLDGGELPTVKITPESRPVMLDPSRGQDGFFIGEPSHINSADSGFGTSFVSMPDPEMHHALTSLGHVDAVLPVLHGPYGEDGTVQGLLEMMGVPYVGCGVFASAACMDKHYTKVVLGAAGIPTAPGVTVDARNFTAADVLAKIEDAGLTYPLFIKPSRAGSSFGVTKVEKADDRETQQDRLAAAIATAGEHDWKVLVEQGIDGREIECAVLCPKAGDEPEASWPGEIVLDHQNDDQFYDFDSKYMDASASHVEVPANLPVSVLEDVRDVARRAFKAVDGAGLSRVDTFVTPDGTVMVNEINTMPGFTPISMYPKAWDATGVSYTELITRLIEGVLR.

Residues 172–391 (KVVLGAAGIP…YTELITRLIE (220 aa)) enclose the ATP-grasp domain. 204 to 266 (DAGLTYPLFI…EQGIDGREIE (63 aa)) contacts ATP. The Mg(2+) site is built by aspartate 345, glutamate 358, and asparagine 360.

It belongs to the D-alanine--D-alanine ligase family. Mg(2+) serves as cofactor. The cofactor is Mn(2+).

The protein resides in the cytoplasm. It catalyses the reaction 2 D-alanine + ATP = D-alanyl-D-alanine + ADP + phosphate + H(+). The protein operates within cell wall biogenesis; peptidoglycan biosynthesis. In terms of biological role, cell wall formation. The polypeptide is D-alanine--D-alanine ligase (Bifidobacterium longum subsp. infantis (strain ATCC 15697 / DSM 20088 / JCM 1222 / NCTC 11817 / S12)).